Here is a 1006-residue protein sequence, read N- to C-terminus: 5'-3' exoribonuclease 2 (1006 aa).

Coiled coils occupy residues 256–287 (FAQDNRKRNNLKDTINMTEEEKQFLQKQNSEQ) and 453–544 (RLKK…AESE). Residues 492–529 (DDAVSKANKTNFNLAEVMKQKIINKKHRLEKDNEEEEI) form a required for retention in the nucleus region. The segment covering 561 to 575 (DRENSETTEVSRDSP) has biased composition (basic and acidic residues). 2 disordered regions span residues 561–584 (DRENSETTEVSRDSPVHSTVNVSE) and 939–1006 (HNYG…ANRR). Phosphoserine is present on Ser-574. A compositionally biased stretch (polar residues) spans 939–956 (HNYGRNSYNSQPGFNNSR). Repeat copies occupy residues 955 to 958 (SRYD), 961 to 964 (NNNY), 972 to 974 (NNN), 975 to 978 (YSGN), 984 to 986 (YSG), and 996 to 999 (SRYD). The tract at residues 955 to 999 (SRYDGGNNNYRQNSNYRNNNYSGNRNSGQYSGNSYSRNNKQSRYD) is 2 X 4 AA repeats of S-R-Y-D, N-N-N-Y, Y-S-G-N. Low complexity predominate over residues 959–993 (GGNNNYRQNSNYRNNNYSGNRNSGQYSGNSYSRNN). Residues 996–1006 (SRYDNSRANRR) are compositionally biased toward basic and acidic residues.

This sequence belongs to the 5'-3' exonuclease family. XRN2/RAT1 subfamily. In terms of assembly, interacts with RAI1 and RTT103. Mg(2+) is required as a cofactor. Requires Mn(2+) as cofactor.

The protein localises to the nucleus. Inhibited by nucleoside 3', 5'-bisphosphates. In terms of biological role, possesses 5'-&gt;3' exoribonuclease activity. Required for the processing of nuclear mRNA, rRNA and small nucleolar RNA (snoRNA) precursors. May promote termination of transcription by RNA polymerase II via the recruitment of 3'-end processing factors to the poly(A) site and by the degradation of nascent RNA downstream of the poly(A) site. The chain is 5'-3' exoribonuclease 2 (RAT1) from Saccharomyces cerevisiae (strain ATCC 204508 / S288c) (Baker's yeast).